Consider the following 208-residue polypeptide: Sec-independent protein translocase protein TatB (208 aa).

A helical membrane pass occupies residues 1 to 21 (MFDIGVGELTLIAVVALVVLG). The segment at 188-208 (DAGTPAASMPSAPAKIQEKQP) is disordered.

Belongs to the TatB family. In terms of assembly, the Tat system comprises two distinct complexes: a TatABC complex, containing multiple copies of TatA, TatB and TatC subunits, and a separate TatA complex, containing only TatA subunits. Substrates initially bind to the TatABC complex, which probably triggers association of the separate TatA complex to form the active translocon.

It is found in the cell inner membrane. Functionally, part of the twin-arginine translocation (Tat) system that transports large folded proteins containing a characteristic twin-arginine motif in their signal peptide across membranes. Together with TatC, TatB is part of a receptor directly interacting with Tat signal peptides. TatB may form an oligomeric binding site that transiently accommodates folded Tat precursor proteins before their translocation. In Xanthomonas axonopodis pv. citri (strain 306), this protein is Sec-independent protein translocase protein TatB.